The following is an 833-amino-acid chain: Leucine--tRNA ligase (833 aa).

Positions 41–52 (PYPSGAGLHVGH) match the 'HIGH' region motif. A 'KMSKS' region motif is present at residues 610-614 (KMSKS). K613 provides a ligand contact to ATP.

The protein belongs to the class-I aminoacyl-tRNA synthetase family.

The protein localises to the cytoplasm. It carries out the reaction tRNA(Leu) + L-leucine + ATP = L-leucyl-tRNA(Leu) + AMP + diphosphate. This Streptococcus pyogenes serotype M49 (strain NZ131) protein is Leucine--tRNA ligase.